The primary structure comprises 811 residues: Zinc finger protein 839 (811 aa).

Residues 197-222 (FKCQTCEKSYIGKGGLARHFKLNPGH) form a C2H2-type zinc finger. 3 disordered regions span residues 329–349 (QRRA…RASP), 455–555 (PDNL…NGSV), and 612–654 (ALEH…AEAG). Over residues 476-485 (SSEKREREAA) the composition is skewed to basic and acidic residues. A compositionally biased stretch (polar residues) spans 501-510 (SNDTTESLAA).

The chain is Zinc finger protein 839 (ZNF839) from Homo sapiens (Human).